A 4579-amino-acid polypeptide reads, in one-letter code: Sacsin (4579 aa).

A Ubiquitin-like domain is found at valine 9–lysine 84. Lysine 943 is subject to N6-acetyllysine. Phosphoserine occurs at positions 1779 and 2511. The residue at position 2516 (threonine 2516) is a Phosphothreonine. Serine 3435 is subject to Phosphoserine. 2 disordered regions span residues proline 4248–leucine 4273 and leucine 4279–leucine 4298. The segment covering serine 4254–glutamate 4267 has biased composition (polar residues). Phosphothreonine is present on threonine 4261. Position 4264 is a phosphoserine (serine 4264). Basic residues predominate over residues threonine 4288–leucine 4298. The 88-residue stretch at isoleucine 4306–serine 4393 folds into the J domain. Positions alanine 4405–threonine 4427 are disordered. Residues threonine 4406 to cysteine 4420 are compositionally biased toward basic and acidic residues. An HEPN domain is found at leucine 4451–isoleucine 4567.

Highly expressed in the central nervous system. Also found in skeletal muscle and at low levels in pancreas.

It localises to the cytoplasm. In terms of biological role, co-chaperone which acts as a regulator of the Hsp70 chaperone machinery and may be involved in the processing of other ataxia-linked proteins. The polypeptide is Sacsin (SACS) (Homo sapiens (Human)).